The chain runs to 478 residues: Argininosuccinate lyase (478 aa).

This sequence belongs to the lyase 1 family. Argininosuccinate lyase subfamily.

The protein resides in the cytoplasm. It carries out the reaction 2-(N(omega)-L-arginino)succinate = fumarate + L-arginine. It functions in the pathway amino-acid biosynthesis; L-arginine biosynthesis; L-arginine from L-ornithine and carbamoyl phosphate: step 3/3. In Rhodospirillum rubrum (strain ATCC 11170 / ATH 1.1.1 / DSM 467 / LMG 4362 / NCIMB 8255 / S1), this protein is Argininosuccinate lyase.